Reading from the N-terminus, the 241-residue chain is 3-deoxy-D-manno-octulosonic acid kinase (241 aa).

Asp-171 is an active-site residue.

The protein belongs to the protein kinase superfamily. KdkA/RfaP family.

Its subcellular location is the cell inner membrane. The catalysed reaction is an alpha-Kdo-(2-&gt;6)-lipid IVA + ATP = a 4-O-phospho-alpha-Kdo-(2-&gt;6)-lipid IVA + ADP + H(+). Its pathway is bacterial outer membrane biogenesis; LPS core biosynthesis. Functionally, catalyzes the ATP-dependent phosphorylation of the 3-deoxy-D-manno-octulosonic acid (Kdo) residue in Kdo-lipid IV(A) at the 4-OH position. This Haemophilus influenzae (strain PittGG) protein is 3-deoxy-D-manno-octulosonic acid kinase.